We begin with the raw amino-acid sequence, 258 residues long: Proteasome subunit alpha type-3 (258 aa).

Glycyl lysine isopeptide (Lys-Gly) (interchain with G-Cter in ubiquitin) cross-links involve residues K100, K199, and K231.

The protein belongs to the peptidase T1A family. As to quaternary structure, the 26S proteasome consists of a 20S proteasome core and two 19S regulatory subunits. The 20S proteasome core is composed of 28 subunits that are arranged in four stacked rings, resulting in a barrel-shaped structure. The two end rings are each formed by seven alpha subunits, and the two central rings are each formed by seven beta subunits. The catalytic chamber with the active sites is on the inside of the barrel.

It is found in the cytoplasm. Its subcellular location is the nucleus. Its function is as follows. The proteasome degrades poly-ubiquitinated proteins in the cytoplasm and in the nucleus. It is essential for the regulated turnover of proteins and for the removal of misfolded proteins. The proteasome is a multicatalytic proteinase complex that is characterized by its ability to cleave peptides with Arg, Phe, Tyr, Leu, and Glu adjacent to the leaving group at neutral or slightly basic pH. It has an ATP-dependent proteolytic activity. The chain is Proteasome subunit alpha type-3 (PRE9) from Saccharomyces cerevisiae (strain ATCC 204508 / S288c) (Baker's yeast).